The following is a 260-amino-acid chain: Mediator of RNA polymerase II transcription subunit 7 (260 aa).

The interval methionine 1–tryptophan 21 is disordered.

Belongs to the Mediator complex subunit 7 family. In terms of assembly, component of the Mediator complex.

It localises to the nucleus. Component of the Mediator complex, a coactivator involved in the regulated transcription of nearly all RNA polymerase II-dependent genes. Mediator functions as a bridge to convey information from gene-specific regulatory proteins to the basal RNA polymerase II transcription machinery. Mediator is recruited to promoters by direct interactions with regulatory proteins and serves as a scaffold for the assembly of a functional preinitiation complex with RNA polymerase II and the general transcription factors. The sequence is that of Mediator of RNA polymerase II transcription subunit 7 (med7) from Aspergillus clavatus (strain ATCC 1007 / CBS 513.65 / DSM 816 / NCTC 3887 / NRRL 1 / QM 1276 / 107).